The sequence spans 322 residues: Eukaryotic translation initiation factor 3 subunit I (322 aa).

5 WD repeats span residues 4–43 (GHER…RLGT), 46–85 (GHQG…IIAS), 141–180 (MTES…KVVD), 184–223 (DHTA…CLKT), and 281–322 (GHFG…NIFE).

It belongs to the eIF-3 subunit I family. In terms of assembly, component of the eukaryotic translation initiation factor 3 (eIF-3) complex. The eIF-3 complex interacts with pix.

The protein localises to the cytoplasm. Component of the eukaryotic translation initiation factor 3 (eIF-3) complex, which is involved in protein synthesis of a specialized repertoire of mRNAs and, together with other initiation factors, stimulates binding of mRNA and methionyl-tRNAi to the 40S ribosome. The eIF-3 complex specifically targets and initiates translation of a subset of mRNAs involved in cell proliferation. This chain is Eukaryotic translation initiation factor 3 subunit I, found in Drosophila ananassae (Fruit fly).